A 375-amino-acid chain; its full sequence is N5-carboxyaminoimidazole ribonucleotide synthase (375 aa).

Residues R108, K148, 153–159, 183–186, E191, H214, and 266–267 each bind ATP; these read GYDGKGQ, EQYL, and NE. In terms of domain architecture, ATP-grasp spans 112–296; that stretch reads KQTLLEANTQ…QFDTHILAIT (185 aa).

The protein belongs to the PurK/PurT family. Homodimer.

It carries out the reaction 5-amino-1-(5-phospho-beta-D-ribosyl)imidazole + hydrogencarbonate + ATP = 5-carboxyamino-1-(5-phospho-D-ribosyl)imidazole + ADP + phosphate + 2 H(+). It participates in purine metabolism; IMP biosynthesis via de novo pathway; 5-amino-1-(5-phospho-D-ribosyl)imidazole-4-carboxylate from 5-amino-1-(5-phospho-D-ribosyl)imidazole (N5-CAIR route): step 1/2. In terms of biological role, catalyzes the ATP-dependent conversion of 5-aminoimidazole ribonucleotide (AIR) and HCO(3)(-) to N5-carboxyaminoimidazole ribonucleotide (N5-CAIR). In Staphylococcus epidermidis (strain ATCC 35984 / DSM 28319 / BCRC 17069 / CCUG 31568 / BM 3577 / RP62A), this protein is N5-carboxyaminoimidazole ribonucleotide synthase.